The primary structure comprises 178 residues: CDP-archaeol synthase (178 aa).

The next 5 membrane-spanning stretches (helical) occupy residues leucine 7 to phenylalanine 27, phenylalanine 56 to glycine 76, valine 91 to leucine 111, valine 125 to valine 145, and isoleucine 149 to tyrosine 169.

It belongs to the CDP-archaeol synthase family. It depends on Mg(2+) as a cofactor.

The protein localises to the cell membrane. The enzyme catalyses 2,3-bis-O-(geranylgeranyl)-sn-glycerol 1-phosphate + CTP + H(+) = CDP-2,3-bis-O-(geranylgeranyl)-sn-glycerol + diphosphate. The protein operates within membrane lipid metabolism; glycerophospholipid metabolism. Catalyzes the formation of CDP-2,3-bis-(O-geranylgeranyl)-sn-glycerol (CDP-archaeol) from 2,3-bis-(O-geranylgeranyl)-sn-glycerol 1-phosphate (DGGGP) and CTP. This reaction is the third ether-bond-formation step in the biosynthesis of archaeal membrane lipids. The sequence is that of CDP-archaeol synthase from Methanococcus vannielii (strain ATCC 35089 / DSM 1224 / JCM 13029 / OCM 148 / SB).